Reading from the N-terminus, the 509-residue chain is ATP synthase subunit alpha (509 aa).

169 to 176 contacts ATP; it reads GDRQTGKT.

It belongs to the ATPase alpha/beta chains family. As to quaternary structure, F-type ATPases have 2 components, CF(1) - the catalytic core - and CF(0) - the membrane proton channel. CF(1) has five subunits: alpha(3), beta(3), gamma(1), delta(1), epsilon(1). CF(0) has three main subunits: a(1), b(2) and c(9-12). The alpha and beta chains form an alternating ring which encloses part of the gamma chain. CF(1) is attached to CF(0) by a central stalk formed by the gamma and epsilon chains, while a peripheral stalk is formed by the delta and b chains.

It localises to the cell inner membrane. It carries out the reaction ATP + H2O + 4 H(+)(in) = ADP + phosphate + 5 H(+)(out). Its function is as follows. Produces ATP from ADP in the presence of a proton gradient across the membrane. The alpha chain is a regulatory subunit. This chain is ATP synthase subunit alpha, found in Methylobacterium nodulans (strain LMG 21967 / CNCM I-2342 / ORS 2060).